The sequence spans 144 residues: Large ribosomal subunit protein uL11 (144 aa).

Belongs to the universal ribosomal protein uL11 family. In terms of assembly, part of the ribosomal stalk of the 50S ribosomal subunit. Interacts with L10 and the large rRNA to form the base of the stalk. L10 forms an elongated spine to which L12 dimers bind in a sequential fashion forming a multimeric L10(L12)X complex. One or more lysine residues are methylated.

Forms part of the ribosomal stalk which helps the ribosome interact with GTP-bound translation factors. The sequence is that of Large ribosomal subunit protein uL11 from Streptomyces griseus subsp. griseus (strain JCM 4626 / CBS 651.72 / NBRC 13350 / KCC S-0626 / ISP 5235).